A 185-amino-acid polypeptide reads, in one-letter code: Ribosome-recycling factor (185 aa).

This sequence belongs to the RRF family.

It is found in the cytoplasm. Its function is as follows. Responsible for the release of ribosomes from messenger RNA at the termination of protein biosynthesis. May increase the efficiency of translation by recycling ribosomes from one round of translation to another. In Enterococcus faecalis (strain ATCC 700802 / V583), this protein is Ribosome-recycling factor.